The chain runs to 420 residues: COP9 signalosome complex subunit 5 (420 aa).

One can recognise an MPN domain in the interval 73–208 (AALSALACMK…IGAFRTMPET (136 aa)). The Zn(2+) site is built by H154, H156, and D167. The short motif at 154-167 (HSHPGYGCWLSGID) is the JAMM motif element.

Belongs to the peptidase M67A family. CSN5 subfamily. In terms of assembly, component of the COP9 signalosome (CSN) complex.

It is found in the cytoplasm. It localises to the nucleus. In terms of biological role, catalytic component of the COP9 signalosome (CSN) complex that acts as an regulator of the ubiquitin (Ubl) conjugation pathway by mediating the deneddylation of the cullin subunit of SCF-type E3 ubiquitin-protein ligase complexes. The CSN complex is involved in the regulation of the mating pheromone response. The chain is COP9 signalosome complex subunit 5 (RRI1) from Eremothecium gossypii (strain ATCC 10895 / CBS 109.51 / FGSC 9923 / NRRL Y-1056) (Yeast).